A 353-amino-acid polypeptide reads, in one-letter code: Mitogen-activated protein kinase FUS3 (353 aa).

A Protein kinase domain is found at 13 to 309 (FQLKSLLGEG…AKEALEHPYL (297 aa)). Residues 19 to 27 (LGEGAYGVV) and Lys42 each bind ATP. Asp137 functions as the Proton acceptor in the catalytic mechanism. Thr180 bears the Phosphothreonine mark. The TXY signature appears at 180–182 (TEY). Tyr182 bears the Phosphotyrosine mark. Residue Lys345 forms a Glycyl lysine isopeptide (Lys-Gly) (interchain with G-Cter in ubiquitin) linkage.

This sequence belongs to the protein kinase superfamily. CMGC Ser/Thr protein kinase family. MAP kinase subfamily. In terms of assembly, in the nucleus, FUS3 forms a complex with DIG1, DIG2 and STE12. The interaction of FUS3 with STE12 depends on the presence of both DIG1 and DIG2. STE12 is lost from FUS3/DIG1/DIG2 complex after pheromone treatment. During its activation and phosphorylation, FUS3 forms a membrane-associated complex with the scaffold protein STE5, the MAPKK STE7, the MAPKKK STE11, and the G-protein beta subunit GBB/STE4; interacting directly with STE7 and STE5. Requires Mg(2+) as cofactor. Post-translationally, dually phosphorylated on Thr-180 and Tyr-182 by STE7 in response to pheromone induction, which activates the enzyme. Activated FUS3 initiates a feedback signal, down-regulating phosphorylation of both, FUS3 and KSS1.

It is found in the nucleus. The protein localises to the cytoplasm. The protein resides in the periplasm. It catalyses the reaction L-seryl-[protein] + ATP = O-phospho-L-seryl-[protein] + ADP + H(+). It carries out the reaction L-threonyl-[protein] + ATP = O-phospho-L-threonyl-[protein] + ADP + H(+). Activated by tyrosine and threonine phosphorylation after pheromone treatment. Together with closely related KSS1, FUS3 is the final kinase in the signal transduction cascade regulating activation/repression of the mating and filamentation pathways, induced by pheromone and nitrogen/carbon limitation, respectively. Phosphorylated FUS3 activates the mating but suppresses the filamentation pathway, whereas activated KSS1 activates both pathways. Pheromone-activated FUS3 functions by inhibiting the binding of the transcriptional activator STE12 to filamentation specific genes while inducing its binding to and activity at mating specific genes. Non-activated FUS3 has a repressive effect on STE12 transcriptional activity. KSS1 can partially compensate for the lack of FUS3 but mating efficiency is reduced and the filamentation program is partially activated upon pheromone signaling. FUS3 phosphorylates STE7, STE5, FAR1, DIG1, DIG2 and STE12. In Saccharomyces cerevisiae (strain ATCC 204508 / S288c) (Baker's yeast), this protein is Mitogen-activated protein kinase FUS3 (FUS3).